The following is a 372-amino-acid chain: ATP phosphoribosyltransferase regulatory subunit (372 aa).

Belongs to the class-II aminoacyl-tRNA synthetase family. HisZ subfamily. As to quaternary structure, heteromultimer composed of HisG and HisZ subunits.

The protein localises to the cytoplasm. It participates in amino-acid biosynthesis; L-histidine biosynthesis; L-histidine from 5-phospho-alpha-D-ribose 1-diphosphate: step 1/9. Its function is as follows. Required for the first step of histidine biosynthesis. May allow the feedback regulation of ATP phosphoribosyltransferase activity by histidine. The sequence is that of ATP phosphoribosyltransferase regulatory subunit from Allorhizobium ampelinum (strain ATCC BAA-846 / DSM 112012 / S4) (Agrobacterium vitis (strain S4)).